Consider the following 350-residue polypeptide: Ribosomal RNA small subunit methyltransferase C (350 aa).

It belongs to the methyltransferase superfamily. RsmC family. As to quaternary structure, monomer.

The protein resides in the cytoplasm. It catalyses the reaction guanosine(1207) in 16S rRNA + S-adenosyl-L-methionine = N(2)-methylguanosine(1207) in 16S rRNA + S-adenosyl-L-homocysteine + H(+). In terms of biological role, specifically methylates the guanine in position 1207 of 16S rRNA in the 30S particle. In Sodalis glossinidius (strain morsitans), this protein is Ribosomal RNA small subunit methyltransferase C.